A 109-amino-acid polypeptide reads, in one-letter code: Putative transposase MJ0856.1 (109 aa).

Cysteine 36, cysteine 39, cysteine 62, and cysteine 65 together coordinate Zn(2+).

The protein belongs to the transposase 35 family.

This Methanocaldococcus jannaschii (strain ATCC 43067 / DSM 2661 / JAL-1 / JCM 10045 / NBRC 100440) (Methanococcus jannaschii) protein is Putative transposase MJ0856.1.